The chain runs to 121 residues: UPF0738 protein BPUM_1088 (121 aa).

This sequence belongs to the UPF0738 family.

This is UPF0738 protein BPUM_1088 from Bacillus pumilus (strain SAFR-032).